A 211-amino-acid polypeptide reads, in one-letter code: Urease accessory protein UreE (211 aa).

Positions 170–211 are disordered; sequence EHHGHSHDRGCDHSHSHSHDHDHDHGHVHGPGCGHAPHHRHD. Positions 176–196 are enriched in basic and acidic residues; the sequence is HDRGCDHSHSHSHDHDHDHGH.

Belongs to the UreE family.

The protein resides in the cytoplasm. Functionally, involved in urease metallocenter assembly. Binds nickel. Probably functions as a nickel donor during metallocenter assembly. In Ralstonia nicotianae (strain ATCC BAA-1114 / GMI1000) (Ralstonia solanacearum), this protein is Urease accessory protein UreE.